We begin with the raw amino-acid sequence, 133 residues long: Cytochrome c-type biogenesis protein CcmE (133 aa).

The Cytoplasmic segment spans residues Met-1 to Arg-7. The chain crosses the membrane as a helical; Signal-anchor for type II membrane protein span at residues Leu-8–Thr-28. Over Leu-29–Pro-133 the chain is Periplasmic. His-120 and Tyr-124 together coordinate heme.

The protein belongs to the CcmE/CycJ family.

The protein localises to the cell inner membrane. Heme chaperone required for the biogenesis of c-type cytochromes. Transiently binds heme delivered by CcmC and transfers the heme to apo-cytochromes in a process facilitated by CcmF and CcmH. This chain is Cytochrome c-type biogenesis protein CcmE, found in Wolbachia sp. subsp. Drosophila simulans (strain wRi).